The primary structure comprises 249 residues: tRNA (guanine-N(1)-)-methyltransferase (249 aa).

S-adenosyl-L-methionine-binding positions include Gly113 and 133-138 (LGDFVL).

The protein belongs to the RNA methyltransferase TrmD family. Homodimer.

Its subcellular location is the cytoplasm. It carries out the reaction guanosine(37) in tRNA + S-adenosyl-L-methionine = N(1)-methylguanosine(37) in tRNA + S-adenosyl-L-homocysteine + H(+). Its function is as follows. Specifically methylates guanosine-37 in various tRNAs. The protein is tRNA (guanine-N(1)-)-methyltransferase of Leptothrix cholodnii (strain ATCC 51168 / LMG 8142 / SP-6) (Leptothrix discophora (strain SP-6)).